Here is a 259-residue protein sequence, read N- to C-terminus: Short chain dehydrogenase ausX (259 aa).

Positions 13, 59, 121, 153, 157, and 186 each coordinate NADP(+). Tyr153 (proton acceptor) is an active-site residue. Tyr153 acts as the Proton donor in catalysis. Lys157 acts as the Lowers pKa of active site Tyr in catalysis.

Belongs to the short-chain dehydrogenases/reductases (SDR) family.

The protein operates within secondary metabolite biosynthesis; terpenoid biosynthesis. Its function is as follows. Short chain dehydrogenase; part of the gene cluster A that mediates the biosynthesis of the fungal meroterpenoid acetoxydehydroaustin. The first step of the pathway is the synthesis of 3,5-dimethylorsellinic acid by the polyketide synthase ausA. 3,5-dimethylorsellinic acid is then prenylated by the polyprenyl transferase ausN. Further epoxidation by the FAD-dependent monooxygenase ausM and cyclization by the probable terpene cyclase ausL lead to the formation of protoaustinoid A. Protoaustinoid A is then oxidized to spiro-lactone preaustinoid A3 by the combined action of the FAD-binding monooxygenases ausB and ausC, and the dioxygenase ausE. Acid-catalyzed keto-rearrangement and ring contraction of the tetraketide portion of preaustinoid A3 by ausJ lead to the formation of preaustinoid A4. The aldo-keto reductase ausK, with the help of ausH, is involved in the next step by transforming preaustinoid A4 into isoaustinone which is in turn hydroxylated by the P450 monooxygenase ausI to form austinolide. The cytochrome P450 monooxygenase ausG then modifies austinolide to austinol. Austinol is further acetylated to austin by the O-acetyltransferase ausP, which spontaneously changes to dehydroaustin. The cytochrome P450 monooxygenase then converts dehydroaustin is into 7-dehydrodehydroaustin. The hydroxylation catalyzed by ausR permits the second O-acetyltransferase ausQ to add an additional acetyl group to the molecule, leading to the formation of acetoxydehydroaustin. Due to genetic rearrangements of the clusters and the subsequent loss of some enzymes, the end product of the Penicillium brasilianum austinoid biosynthesis clusters is acetoxydehydroaustin. This chain is Short chain dehydrogenase ausX, found in Penicillium brasilianum.